The sequence spans 344 residues: tRNA(Ile)-lysidine synthase (344 aa).

43-48 (SGGADS) provides a ligand contact to ATP.

It belongs to the tRNA(Ile)-lysidine synthase family.

Its subcellular location is the cytoplasm. The enzyme catalyses cytidine(34) in tRNA(Ile2) + L-lysine + ATP = lysidine(34) in tRNA(Ile2) + AMP + diphosphate + H(+). Its function is as follows. Ligates lysine onto the cytidine present at position 34 of the AUA codon-specific tRNA(Ile) that contains the anticodon CAU, in an ATP-dependent manner. Cytidine is converted to lysidine, thus changing the amino acid specificity of the tRNA from methionine to isoleucine. The chain is tRNA(Ile)-lysidine synthase from Bordetella parapertussis (strain 12822 / ATCC BAA-587 / NCTC 13253).